Consider the following 408-residue polypeptide: Tripartite motif containing 13 (408 aa).

The RING-type zinc finger occupies 10-58 (CPICCSLFDDPRVLPCSHNFCKKCLDGVLEENSRTMQWRPSSFKCPTCR). The B box-type zinc-finger motif lies at 89 to 131 (PKMPVCKEHSDQPLNIFCSTDLKLICGSCATTGEHKKHVFSSI). Zn(2+) contacts are provided by cysteine 94, histidine 97, cysteine 117, and histidine 123. The chain crosses the membrane as a helical span at residues 322–342 (ILVVACLILLLVTFLCAYPFI).

Its subcellular location is the endoplasmic reticulum membrane. The protein operates within protein modification; protein ubiquitination. In terms of biological role, E3 ubiquitin ligase involved in the retrotranslocation and turnover of membrane and secretory proteins from the ER through a set of processes named ER-associated degradation (ERAD). This process acts on misfolded proteins as well as in the regulated degradation of correctly folded proteins. This Xenopus tropicalis (Western clawed frog) protein is Tripartite motif containing 13 (trim13).